The sequence spans 288 residues: NAD(P)H quinone oxidoreductase YCP4 (288 aa).

The Flavodoxin-like domain occupies 3 to 192 (IAIIQYSTYG…EIAEKQGEAF (190 aa)). Residues 9-13 (STYGH) and 110-164 (VFVS…SPYG) each bind FMN. The disordered stretch occupies residues 202-288 (GSKKTNTTTT…KSSCSKCIIM (87 aa)). Low complexity predominate over residues 205-254 (KTNTTTTSKSAATSDAAGTTSGTAAGTSAATGAATGTSAPKESTKEASSS). Positions 261-288 (NGTATRTQQSTKAPETAEKSSCSKCIIM) are enriched in polar residues.

It belongs to the WrbA family. The cofactor is FMN.

The protein resides in the cell membrane. It catalyses the reaction a quinone + NADH + H(+) = a quinol + NAD(+). It carries out the reaction a quinone + NADPH + H(+) = a quinol + NADP(+). In terms of biological role, flavodoxin-like protein (FLP) that plays a role in cell wall integrity, oxidative stress protection and virulence. FLPs act as NAD(P)H quinone oxidoreductases. Reduces ubiquinone (coenzyme Q), enabling it to serve as an antioxidant in the membrane. This is NAD(P)H quinone oxidoreductase YCP4 from Candida albicans (strain SC5314 / ATCC MYA-2876) (Yeast).